The following is a 650-amino-acid chain: MIRNNKSMFIKLKDQSSYEMPSGSTAKDLADKLNLKGPHEALGASINGKTVDLSYPLQEGDQVILWGFNDPEGKEIFWHTSAHVLAQAILRLWPDAQPTIGPPIENGFYYDFANLTISDADFEKIEKEMQAIISENFQIKREVISTKSDALKQFQNNPYKCELINSFEDESTLTGYRQGEFYDLCRGPHLFNLGKIKALKLMKTAGAYWRGDSNKEMLTRIYAISFPDRKLLKDYLHQLEEAKKRDHKLLGAKLDLFSLKEEAPGMPFIHPKGLIVWNQLVAYIRECLSRHDYIEIKTPTMMTKELWEISGHWGNYRQNMFISQIEDRDFAIKPMNCPGCMLYYKSHTHSYRELPLRIAEIGNVHRYEPSGSLSGLFRVRSFHQDDAHIFMKPSDIQQEILGVLALADEIYSTFGLSYRLELSTRPEKNTIGTDHEWEVATAGLKGALDEMGKEYRINEGDGAFYGPKIDFHIRDAINRSWQCGTIQLDMALPEKFELEYTFSDGTRQRPVMIHRAIFGSIERFFGILIEHYVGKFPLWLSPSQIRFITVADRHEPYARELAKRFKNAGFHVDVDSTQESVSKKVRNAQLAQFNYILTIGDQEVEHKTANLRTRDNVVHGEIQIDEFIQKLEIEKQQRQSHSPYASAERN.

Positions 5–67 (NKSMFIKLKD…QEGDQVILWG (63 aa)) constitute a TGS domain. Residues 246–537 (DHKLLGAKLD…LIEHYVGKFP (292 aa)) form a catalytic region. C337, H388, and H514 together coordinate Zn(2+).

The protein belongs to the class-II aminoacyl-tRNA synthetase family. As to quaternary structure, homodimer. The cofactor is Zn(2+).

The protein localises to the cytoplasm. It catalyses the reaction tRNA(Thr) + L-threonine + ATP = L-threonyl-tRNA(Thr) + AMP + diphosphate + H(+). Catalyzes the attachment of threonine to tRNA(Thr) in a two-step reaction: L-threonine is first activated by ATP to form Thr-AMP and then transferred to the acceptor end of tRNA(Thr). Also edits incorrectly charged L-seryl-tRNA(Thr). The polypeptide is Threonine--tRNA ligase (Protochlamydia amoebophila (strain UWE25)).